The primary structure comprises 867 residues: Mitochondrial escape protein 2 (867 aa).

Disordered regions lie at residues 1–20 and 44–66; these read MISA…RGPR and RTTR…KESG. The transit peptide at 1 to 41 directs the protein to the mitochondrion; that stretch reads MISAHILSRQATRPGHRGPRFTTHSTALLVQRSLGQGLPLA. At 42-308 the chain is on the mitochondrial matrix side; that stretch reads HRRTTRAWES…IWAWFTSHPR (267 aa). Residues 48–59 show a composition bias toward low complexity; the sequence is AWESTSSSTAST. Residues 203 to 293 enclose the RRM domain; it reads SRIRVEFVAA…TKLRLSYEQR (91 aa). A helical membrane pass occupies residues 309-329; that stretch reads IVIPLVAALIAAFTVAVFDPI. Residues 330-867 lie on the Mitochondrial intermembrane side of the membrane; sequence REFFVKAHVQ…GVVKGQMVKG (538 aa). Residues 614–639 are compositionally biased toward basic and acidic residues; that stretch reads FAHDGQQKDSESGDQDNDNKNQKKDS. Positions 614-647 are disordered; that stretch reads FAHDGQQKDSESGDQDNDNKNQKKDSNTPAPLDP. The stretch at 797–857 forms a coiled coil; that stretch reads LLVLTELAKM…ARLKGLEKEM (61 aa).

It belongs to the YME2 family.

It is found in the mitochondrion inner membrane. Its function is as follows. Plays a role in maintaining the mitochondrial genome and in controlling the mtDNA escape. Involved in the regulation of mtDNA nucleotide structure and number. May have a dispensable role in early maturation of pre-rRNA. This is Mitochondrial escape protein 2 (msp-45) from Neurospora crassa (strain ATCC 24698 / 74-OR23-1A / CBS 708.71 / DSM 1257 / FGSC 987).